A 573-amino-acid polypeptide reads, in one-letter code: MLRLPAVLRQIRPVSRALAPHLTRAYAKDVKFGADARALMLQGVDLLADAVAVTMGPKGRTVIIEQSWGSPKVTKDGVTVAKAIDLKDKYKNIGAKLVQDVANNTNEEAGDGTTTATVLARAIAKEGFEKISKGANPVEIRRGVMLAVDAITAELKKLSKPVTTPEEIAQVATISANGDQEIGNIISDAMKKVGRKGVITVKDGKTLNDELEIIEGMKFDRGYISPYFINTAKGQKCEFQDAYVLISEKKISSVQSIVPALEIANSHRKPLVIIAEDVDGEALSTLVLNRLKVGLQVVAVKAPGFGDNRKNQLKDMAIATGGAVFGEEGLSLNVEDIQPHDFGKVGEVIVTKDDTMLLKGKGEKAQIEKRIQEIIEQLEVTTSEYEKEKLNERLAKLSDGVAVLKVGGTSDVEVNEKKDRVTDALNATRAAVEEGIVPGGGCALLRCIPALDALKPANEDQKIGIEIIKRTLKIPAMTIAKNAGVEGSLIVEKILQSSSEVGYDAMLGEFVNMVEKGIIDPTKVVRTALMDAAGVASLLSTAEAVVTEVPKEEKEPAMGGMGGMGGGMGGGMF.

The N-terminal 26 residues, M1–Y26, are a transit peptide targeting the mitochondrion. Residues K75 and D111–T115 contribute to the ATP site. Phosphotyrosine is present on Y227. The ATP site is built by G440 and D520.

It localises to the mitochondrion matrix. It catalyses the reaction ATP + H2O + a folded polypeptide = ADP + phosphate + an unfolded polypeptide.. Functionally, chaperonin implicated in mitochondrial protein import and macromolecular assembly. Together with Hsp10, facilitates the correct folding of imported proteins. May also prevent misfolding and promote the refolding and proper assembly of unfolded polypeptides generated under stress conditions in the mitochondrial matrix. The functional units of these chaperonins consist of heptameric rings of the large subunit Hsp60, which function as a back-to-back double ring. In a cyclic reaction, Hsp60 ring complexes bind one unfolded substrate protein per ring, followed by the binding of ATP and association with 2 heptameric rings of the co-chaperonin Hsp10. This leads to sequestration of the substrate protein in the inner cavity of Hsp60 where, for a certain period of time, it can fold undisturbed by other cell components. Synchronous hydrolysis of ATP in all Hsp60 subunits results in the dissociation of the chaperonin rings and the release of ADP and the folded substrate protein. The protein is 60 kDa heat shock protein, mitochondrial of Gallus gallus (Chicken).